The sequence spans 148 residues: Angiogenin-1 (148 aa).

The signal sequence occupies residues 1–23 (MVMVLSPLLLVFILGLGLTPVAP). Catalysis depends on His-37, which acts as the Proton acceptor. Arg-45 provides a ligand contact to tRNA. Cystine bridges form between Cys-50–Cys-105, Cys-63–Cys-116, and Cys-81–Cys-131. A Nucleolar localization signal motif is present at residues 55–59 (KNRRL). Cys-105 and Ile-127 together coordinate tRNA. His-138 acts as the Proton donor in catalysis.

This sequence belongs to the pancreatic ribonuclease family. In terms of assembly, homodimer. Interacts with RNH1; inhibiting ANG ribonuclease activity. Serum and milk.

Its subcellular location is the secreted. It localises to the nucleus. The protein resides in the nucleolus. The protein localises to the cytoplasm. It is found in the stress granule. Functionally, secreted ribonuclease that can either promote or restrict cell proliferation of target cells, depending on the context. Endocytosed in target cells via its receptor PLXNB2 and translocates to the cytoplasm or nucleus. Under stress conditions, localizes to the cytoplasm and promotes the assembly of stress granules (SGs): specifically cleaves a subset of tRNAs within anticodon loops to produce tRNA-derived stress-induced fragments (tiRNAs), resulting in translation repression and inhibition of cell proliferation. tiRNas also prevent formation of apoptosome, thereby promoting cell survival. Preferentially cleaves RNAs between a pyrimidine and an adenosine residue, suggesting that it cleaves the anticodon loop of tRNA(Ala) (32-UUAGCAU-38) after positions 33 and 36. Cleaves a subset of tRNAs, including tRNA(Ala), tRNA(Glu), tRNA(Gly), tRNA(Lys), tRNA(Val), tRNA(His), tRNA(Asp) and tRNA(Sec). Under growth conditions and in differentiated cells, translocates to the nucleus and stimulates ribosomal RNA (rRNA) transcription, including that containing the initiation site sequences of 45S rRNA, thereby promoting cell growth and proliferation. Angiogenin induces vascularization of normal and malignant tissues via its ability to promote rRNA transcription. In Bos taurus (Bovine), this protein is Angiogenin-1 (ANG1).